Consider the following 556-residue polypeptide: MQTDIQIAQRCKMHHIADIAKNLGIDTEDIEFYGNYKAKLSDKLWDKVKNKKDGKLVLVTAINPTPAGEGKTTTTVGLGQAMARIGKNAVIALREPSMGPVMGIKGGAAGGGYAQVVPMEDINLHFTGDMHAITAANNLLSAAIDNHLQQGNMLNIDSRQIVWKRCMDMNDRALRNVIVGLGGKINGVPREDGFNITVASEIMAILCLALDIKDLKKRLGRIIIGYTYEGKPVTAHDLKVDGAMTLLLKDAIKPNLVQTLEGTPALMHGGPFANIAHGCNSISATKLALKLSDYVITEAGFGADLGAEKFFDIKCRFAGFKPDAVVLVATIRALKYNGGVRKEDLKEENIDALSKGFANAEKHIENLKQFGVPVMVAINHFDTDTEAEIKLIQEKCSSLGVEVAFSDVFLKGGEGGIELAEKLVALTDSTVSNFAPIYDEKLPIKEKVQQIVSKIYGGRNVIYNAAAEKSIAKIEEMGLDRLPICMAKTQYSLSDNPALLGRPQDFDVTVKEVRISAGAGFLVVLTGDIMTMPGLPKVPAAERIDINESGVITGLF.

ATP is bound at residue 65–72 (TPAGEGKT).

This sequence belongs to the formate--tetrahydrofolate ligase family.

The catalysed reaction is (6S)-5,6,7,8-tetrahydrofolate + formate + ATP = (6R)-10-formyltetrahydrofolate + ADP + phosphate. Its pathway is one-carbon metabolism; tetrahydrofolate interconversion. The protein is Formate--tetrahydrofolate ligase of Ruminiclostridium cellulolyticum (strain ATCC 35319 / DSM 5812 / JCM 6584 / H10) (Clostridium cellulolyticum).